The following is a 500-amino-acid chain: NAD(P)H-quinone oxidoreductase chain 4, chloroplastic (500 aa).

Transmembrane regions (helical) follow at residues 4-24 (FPWL…MLFL), 35-55 (YTIC…CYNF), 87-107 (IGTI…AFPV), 113-130 (LFHF…GSFS), 134-154 (LLLF…LLAM), 167-187 (FILY…GISL), 211-231 (ILFY…IPLH), 242-262 (HYST…YGLV), 272-292 (AHSM…IYAA), 305-325 (IAYS…SITD), 330-350 (GAIL…FLAG), 364-384 (MGGM…LSMA), 386-406 (LALP…GIIT), 411-431 (FLIF…LTPI), and 462-482 (LFLS…PDFV).

The protein belongs to the complex I subunit 4 family.

It is found in the plastid. The protein localises to the chloroplast thylakoid membrane. The catalysed reaction is a plastoquinone + NADH + (n+1) H(+)(in) = a plastoquinol + NAD(+) + n H(+)(out). The enzyme catalyses a plastoquinone + NADPH + (n+1) H(+)(in) = a plastoquinol + NADP(+) + n H(+)(out). This is NAD(P)H-quinone oxidoreductase chain 4, chloroplastic from Capsella bursa-pastoris (Shepherd's purse).